The following is a 205-amino-acid chain: Holliday junction branch migration complex subunit RuvA (205 aa).

The tract at residues 1–64 (MIGRLKGILV…EDAQLLYGFI (64 aa)) is domain I. The interval 65–143 (HKEERSLFRL…SLMEASMGAE (79 aa)) is domain II. The flexible linker stretch occupies residues 144–156 (REFVLKSNFTPAP). Residues 157–205 (VAATVEEDAIAALLSLGYKPQQASKAVSSAFQEGMDPEQLIKAALKSML) form a domain III region.

This sequence belongs to the RuvA family. As to quaternary structure, homotetramer. Forms an RuvA(8)-RuvB(12)-Holliday junction (HJ) complex. HJ DNA is sandwiched between 2 RuvA tetramers; dsDNA enters through RuvA and exits via RuvB. An RuvB hexamer assembles on each DNA strand where it exits the tetramer. Each RuvB hexamer is contacted by two RuvA subunits (via domain III) on 2 adjacent RuvB subunits; this complex drives branch migration. In the full resolvosome a probable DNA-RuvA(4)-RuvB(12)-RuvC(2) complex forms which resolves the HJ.

The protein resides in the cytoplasm. In terms of biological role, the RuvA-RuvB-RuvC complex processes Holliday junction (HJ) DNA during genetic recombination and DNA repair, while the RuvA-RuvB complex plays an important role in the rescue of blocked DNA replication forks via replication fork reversal (RFR). RuvA specifically binds to HJ cruciform DNA, conferring on it an open structure. The RuvB hexamer acts as an ATP-dependent pump, pulling dsDNA into and through the RuvAB complex. HJ branch migration allows RuvC to scan DNA until it finds its consensus sequence, where it cleaves and resolves the cruciform DNA. The protein is Holliday junction branch migration complex subunit RuvA of Shewanella amazonensis (strain ATCC BAA-1098 / SB2B).